A 145-amino-acid chain; its full sequence is D-aminoacyl-tRNA deacylase (145 aa).

The short motif at 137 to 138 is the Gly-cisPro motif, important for rejection of L-amino acids element; the sequence is GP.

It belongs to the DTD family. In terms of assembly, homodimer.

Its subcellular location is the cytoplasm. It carries out the reaction glycyl-tRNA(Ala) + H2O = tRNA(Ala) + glycine + H(+). It catalyses the reaction a D-aminoacyl-tRNA + H2O = a tRNA + a D-alpha-amino acid + H(+). An aminoacyl-tRNA editing enzyme that deacylates mischarged D-aminoacyl-tRNAs. Also deacylates mischarged glycyl-tRNA(Ala), protecting cells against glycine mischarging by AlaRS. Acts via tRNA-based rather than protein-based catalysis; rejects L-amino acids rather than detecting D-amino acids in the active site. By recycling D-aminoacyl-tRNA to D-amino acids and free tRNA molecules, this enzyme counteracts the toxicity associated with the formation of D-aminoacyl-tRNA entities in vivo and helps enforce protein L-homochirality. The protein is D-aminoacyl-tRNA deacylase of Lactobacillus acidophilus (strain ATCC 700396 / NCK56 / N2 / NCFM).